The chain runs to 88 residues: Large ribosomal subunit protein eL15 (88 aa).

Belongs to the eukaryotic ribosomal protein eL15 family.

This is Large ribosomal subunit protein eL15 (RPL15) from Brassica napus (Rape).